Here is a 327-residue protein sequence, read N- to C-terminus: Cysteine synthase (327 aa).

Position 65 is an N6-(pyridoxal phosphate)lysine (K65). Residues N95, 200 to 204, and S282 each bind pyridoxal 5'-phosphate; that span reads GTGGT.

The protein belongs to the cysteine synthase/cystathionine beta-synthase family. The cofactor is pyridoxal 5'-phosphate.

It catalyses the reaction O-acetyl-L-serine + hydrogen sulfide = L-cysteine + acetate. Its pathway is amino-acid biosynthesis; L-cysteine biosynthesis; L-cysteine from L-serine: step 2/2. In Aquifex aeolicus (strain VF5), this protein is Cysteine synthase (cysM).